Consider the following 517-residue polypeptide: Forkhead box protein N4 (517 aa).

The fork-head DNA-binding region spans 193–289 (KPIYSYSCLI…EEMHKWKRKD (97 aa)). Disordered regions lie at residues 365–398 (VQPQAHLAPDSPAPAQTPPLHALPDLSPSPLPHP) and 497–517 (SGTSSSSQYLGAQGNKPIALL).

It localises to the nucleus. In terms of biological role, transcription factor essential for neural and some non-neural tissues development, such as retina and lung respectively. Binds to an 11-bp consensus sequence containing the invariant tetranucleotide 5'-ACGC-3'. During development of the central nervous system, is required to specify the amacrine and horizontal cell fates from multipotent retinal progenitors while suppressing the alternative photoreceptor cell fates through activating DLL4-NOTCH signaling. Also acts synergistically with ASCL1/MASH1 to activate DLL4-NOTCH signaling and drive commitment of p2 progenitors to the V2b interneuron fates during spinal cord neurogenesis. In development of non-neural tissues, plays an essential role in the specification of the atrioventricular canal and is indirectly required for patterning the distal airway during lung development. The chain is Forkhead box protein N4 (FOXN4) from Homo sapiens (Human).